A 527-amino-acid chain; its full sequence is Glutamate--cysteine ligase (527 aa).

The protein belongs to the glutamate--cysteine ligase type 1 family. Type 1 subfamily.

It catalyses the reaction L-cysteine + L-glutamate + ATP = gamma-L-glutamyl-L-cysteine + ADP + phosphate + H(+). It participates in sulfur metabolism; glutathione biosynthesis; glutathione from L-cysteine and L-glutamate: step 1/2. The sequence is that of Glutamate--cysteine ligase from Bordetella parapertussis (strain 12822 / ATCC BAA-587 / NCTC 13253).